The following is a 64-amino-acid chain: Large ribosomal subunit protein bL28 (64 aa).

This sequence belongs to the bacterial ribosomal protein bL28 family.

The protein is Large ribosomal subunit protein bL28 of Campylobacter lari (strain RM2100 / D67 / ATCC BAA-1060).